We begin with the raw amino-acid sequence, 587 residues long: Putative adenylate cyclase 3 (587 aa).

Residues 12 to 127 enclose the Guanylate cyclase domain; that stretch reads AILAADAVGY…DGVNVAARIE (116 aa). 5 TPR repeats span residues 343–376, 421–454, 455–488, 490–522, and 524–556; these read LLVRSRQAILQFNALSSMEARRMLHRVLEIDPGM, PQGHYTLALALSWMRRLDEAEHAAERAIELDPNS, ANAYTALGTIRDFQGRHEEALALYTRAHRLDPQF, LSLHFQGRALLNLGRFDEAEVAFKRRLLLAPRS, and MTRFYLACLYGRTGRHEEARGYWREVLGVNPSF.

Belongs to the adenylyl cyclase class-3 family.

It catalyses the reaction ATP = 3',5'-cyclic AMP + diphosphate. This Rhizobium meliloti (strain 1021) (Ensifer meliloti) protein is Putative adenylate cyclase 3 (cya3).